The following is a 359-amino-acid chain: MNILTPVAERLPSREEAEEALAVLRRWATHTPASDVAALAPEAPALVYPELSRSYPRAFTVDEAYKASLPDLQNGPASLIVGAKAVIQHVGISNFRLPIRYHTRDNGDLQLETSVTGTVSLEAEKKGINMSRIMRSFYAHAEQAFSFEVIERALEDYKRDLESFDARIQMRFSFPVKVPSLRSGLTGWQYYDIALELVDRGGVRKEIMHLDFVYSSTCPCSLELSEHARRERGQLATPHSQRSVARISVEVRQGKCLWFEDLLDLVRSAVPTETQVMVKREDEQAFAELNAANPIFVEDAARSFCQALQSDPRIGDFRVVASHQESLHSHDAVSVLTEGPTFAAESLDPRLFSSLYHVG.

The protein belongs to the GTP cyclohydrolase IV family.

The catalysed reaction is GTP + H2O = 7,8-dihydroneopterin 3'-triphosphate + formate + H(+). It functions in the pathway cofactor biosynthesis; 7,8-dihydroneopterin triphosphate biosynthesis; 7,8-dihydroneopterin triphosphate from GTP: step 1/1. Converts GTP to 7,8-dihydroneopterin triphosphate. The sequence is that of GTP cyclohydrolase FolE2 from Cereibacter sphaeroides (strain KD131 / KCTC 12085) (Rhodobacter sphaeroides).